The chain runs to 205 residues: Ribonuclease HII (205 aa).

Residues 14 to 201 (EIVAGVDEAG…KGNINHSAIL (188 aa)) enclose the RNase H type-2 domain. D20, E21, and D111 together coordinate a divalent metal cation.

Belongs to the RNase HII family. Mn(2+) is required as a cofactor. It depends on Mg(2+) as a cofactor.

Its subcellular location is the cytoplasm. It carries out the reaction Endonucleolytic cleavage to 5'-phosphomonoester.. In terms of biological role, endonuclease that specifically degrades the RNA of RNA-DNA hybrids. This Orientia tsutsugamushi (strain Boryong) (Rickettsia tsutsugamushi) protein is Ribonuclease HII.